The following is a 752-amino-acid chain: uncharacterized protein (752 aa).

Phosphoserine is present on residues Ser-202 and Ser-582. The disordered stretch occupies residues 596–752; sequence EEEKESVEVE…KTGEDGEIVL (157 aa). 2 stretches are compositionally biased toward basic and acidic residues: residues 601 to 613 and 641 to 677; these read SVEVEEGKHKNDL and LKSEDDNTSEASKDPSSHVKSPENIEKLKQNDDHFEV. A compositionally biased stretch (polar residues) spans 695–718; that stretch reads NNVAETILEVTSSPKSSENSQKQS. Residues Ser-707 and Ser-738 each carry the phosphoserine modification.

This is an uncharacterized protein from Schizosaccharomyces pombe (strain 972 / ATCC 24843) (Fission yeast).